The chain runs to 450 residues: UDP-N-acetylmuramoylalanine--D-glutamate ligase (450 aa).

ATP is bound at residue 119 to 125; the sequence is GSNGKTT.

The protein belongs to the MurCDEF family.

Its subcellular location is the cytoplasm. It catalyses the reaction UDP-N-acetyl-alpha-D-muramoyl-L-alanine + D-glutamate + ATP = UDP-N-acetyl-alpha-D-muramoyl-L-alanyl-D-glutamate + ADP + phosphate + H(+). Its pathway is cell wall biogenesis; peptidoglycan biosynthesis. In terms of biological role, cell wall formation. Catalyzes the addition of glutamate to the nucleotide precursor UDP-N-acetylmuramoyl-L-alanine (UMA). This chain is UDP-N-acetylmuramoylalanine--D-glutamate ligase, found in Streptococcus pneumoniae (strain JJA).